Consider the following 494-residue polypeptide: Probable malate:quinone oxidoreductase 3 (494 aa).

The protein belongs to the MQO family. FAD serves as cofactor.

It carries out the reaction (S)-malate + a quinone = a quinol + oxaloacetate. Its pathway is carbohydrate metabolism; tricarboxylic acid cycle; oxaloacetate from (S)-malate (quinone route): step 1/1. This Staphylococcus epidermidis (strain ATCC 35984 / DSM 28319 / BCRC 17069 / CCUG 31568 / BM 3577 / RP62A) protein is Probable malate:quinone oxidoreductase 3.